The sequence spans 82 residues: Vejovine (82 aa).

Positions 1–22 are cleaved as a signal peptide; the sequence is MNAKTLFVVFLIGMLVTEQVEA. Residues 70–82 constitute a propeptide that is removed on maturation; that stretch reads MTLDEIVDAMYYD.

This sequence belongs to the non-disulfide-bridged peptide (NDBP) superfamily. Long chain multifunctional peptide (group 2) family. As to expression, expressed by the venom gland.

The protein resides in the secreted. It localises to the target cell membrane. In terms of biological role, displays significant potent antimicrobial activity against clinical isolates of Gram-negative multidrug resistant strains of E.coli, P.aeruginosa and A.baumanii with MIC values as low as 4.4 uM. Additionally, it displays low cytolytic and hemolytic activity against human erythrocytes reaching 50% hemolysis at 100 uM. In Vaejovis mexicanus (Mexican scorpion), this protein is Vejovine.